We begin with the raw amino-acid sequence, 263 residues long: Chaperone protein ClpE (263 aa).

The N-terminal stretch at 1-34 (MSKRNAVTTFFTNRVTKALGMTLALMMTCQSAMA) is a signal peptide. A compositionally biased stretch (polar residues) spans 238-255 (QKKTPTSSGQKASDSLVN). Residues 238–263 (QKKTPTSSGQKASDSLVNPSDKADKK) form a disordered region.

The protein belongs to the periplasmic pilus chaperone family.

Its subcellular location is the periplasm. In terms of biological role, involved in the biogenesis of the CS31A capsule-like antigen. This Escherichia coli protein is Chaperone protein ClpE (clpE).